The primary structure comprises 317 residues: MSSISGLVEDEISSFFESSPPLKNKEEIVANLNQFIELNSSCQGGMRRIVCVTSGGTTVPLEQRCVRYIDNFSSGNRGAASTENFVKAGYAVIFLYRRGTCQPYCRYLPDDPFLECFEFPDAKNIQVHGSHSGAVKMAVMDQQAAVAEGRLLKLPFSTIYEYLQMLRLIATILKDVGPCSMFYLAAAVSDFYVPWLSMTEHKIESGSGPLDIRLAQVPKMLSILRSNWAPKAFCISFKLETDSKILLEKATKALQKYKVHAVVANELLTRKEEVVVVSSSGNVVVRRDSNKPESIVEDNLIRLLVDRHSTYIKESLT.

Belongs to the PPC synthetase family. As to quaternary structure, homodimer.

It carries out the reaction (R)-4'-phosphopantothenate + L-cysteine + ATP = N-[(R)-4-phosphopantothenoyl]-L-cysteine + AMP + diphosphate + H(+). It functions in the pathway cofactor biosynthesis; coenzyme A biosynthesis; CoA from (R)-pantothenate: step 2/5. Functionally, catalyzes the first step in the biosynthesis of coenzyme A from vitamin B5/pantothenate, where cysteine is conjugated to 4'-phosphopantothenate to form 4-phosphopantothenoylcysteine. The catalytic activity is not CTP- but ATP-dependent. The protein is Phosphopantothenate--cysteine ligase 1 (PPCS1) of Arabidopsis thaliana (Mouse-ear cress).